A 57-amino-acid polypeptide reads, in one-letter code: MQSLAQFKSSGLWVTTHAWLNDRFLLPESQQKNLAELKRSFLDPALKRINEKTPLLA.

This is an uncharacterized protein from Escherichia coli.